We begin with the raw amino-acid sequence, 403 residues long: 4-hydroxy-3-methylbut-2-enyl diphosphate reductase (403 aa).

A [4Fe-4S] cluster-binding site is contributed by Cys66. A (2E)-4-hydroxy-3-methylbut-2-enyl diphosphate-binding site is contributed by His96. His96 contacts dimethylallyl diphosphate. Isopentenyl diphosphate is bound at residue His96. Position 157 (Cys157) interacts with [4Fe-4S] cluster. A (2E)-4-hydroxy-3-methylbut-2-enyl diphosphate-binding site is contributed by His185. His185 provides a ligand contact to dimethylallyl diphosphate. His185 is an isopentenyl diphosphate binding site. The Proton donor role is filled by Glu187. Residue Thr250 coordinates (2E)-4-hydroxy-3-methylbut-2-enyl diphosphate. Cys288 contacts [4Fe-4S] cluster. Residues Ser317, Ser318, Asn319, and Ser379 each coordinate (2E)-4-hydroxy-3-methylbut-2-enyl diphosphate. The dimethylallyl diphosphate site is built by Ser317, Ser318, Asn319, and Ser379. Isopentenyl diphosphate-binding residues include Ser317, Ser318, Asn319, and Ser379.

Belongs to the IspH family. Requires [4Fe-4S] cluster as cofactor.

The enzyme catalyses isopentenyl diphosphate + 2 oxidized [2Fe-2S]-[ferredoxin] + H2O = (2E)-4-hydroxy-3-methylbut-2-enyl diphosphate + 2 reduced [2Fe-2S]-[ferredoxin] + 2 H(+). The catalysed reaction is dimethylallyl diphosphate + 2 oxidized [2Fe-2S]-[ferredoxin] + H2O = (2E)-4-hydroxy-3-methylbut-2-enyl diphosphate + 2 reduced [2Fe-2S]-[ferredoxin] + 2 H(+). It participates in isoprenoid biosynthesis; dimethylallyl diphosphate biosynthesis; dimethylallyl diphosphate from (2E)-4-hydroxy-3-methylbutenyl diphosphate: step 1/1. It functions in the pathway isoprenoid biosynthesis; isopentenyl diphosphate biosynthesis via DXP pathway; isopentenyl diphosphate from 1-deoxy-D-xylulose 5-phosphate: step 6/6. Functionally, catalyzes the conversion of 1-hydroxy-2-methyl-2-(E)-butenyl 4-diphosphate (HMBPP) into a mixture of isopentenyl diphosphate (IPP) and dimethylallyl diphosphate (DMAPP). Acts in the terminal step of the DOXP/MEP pathway for isoprenoid precursor biosynthesis. The chain is 4-hydroxy-3-methylbut-2-enyl diphosphate reductase from Rippkaea orientalis (strain PCC 8801 / RF-1) (Cyanothece sp. (strain PCC 8801)).